The sequence spans 76 residues: Antimicrobial peptide lumbricin-1 (76 aa).

Positions 1–14 are cleaved as a propeptide — removed in mature form; sequence MSLCISDYLYLTLT.

Its function is as follows. Displays antimicrobial activity against the Gram-positive bacteria B.subtilis ATCC 62037, S.aureus ATCC 15752 and S.mutans ATCC 25175, the Gram-negative bacteria E.coli ATCC 27325, P.putida ATCC 17426 and Serratia sp. ATCC 21074, and the fungi C.albicans ATCC 10231, C.neoformans ATCC 34881 and S.cerevisiae ATCC 44774. Does not possess hemolytic activity. The protein is Antimicrobial peptide lumbricin-1 of Lumbricus rubellus (Humus earthworm).